A 368-amino-acid polypeptide reads, in one-letter code: 1-deoxy-D-xylulose 5-phosphate reductoisomerase (368 aa).

The NADPH site is built by threonine 7, glycine 8, serine 9, isoleucine 10, glycine 31, lysine 32, asparagine 33, and asparagine 113. Lysine 114 serves as a coordination point for 1-deoxy-D-xylulose 5-phosphate. Glutamate 115 serves as a coordination point for NADPH. Residue aspartate 133 participates in Mn(2+) binding. 1-deoxy-D-xylulose 5-phosphate-binding residues include serine 134, glutamate 135, serine 158, and histidine 181. Glutamate 135 lines the Mn(2+) pocket. NADPH is bound at residue glycine 187. Residues serine 194, asparagine 199, lysine 200, and glutamate 203 each contribute to the 1-deoxy-D-xylulose 5-phosphate site. Position 203 (glutamate 203) interacts with Mn(2+).

This sequence belongs to the DXR family. Requires Mg(2+) as cofactor. Mn(2+) is required as a cofactor.

It catalyses the reaction 2-C-methyl-D-erythritol 4-phosphate + NADP(+) = 1-deoxy-D-xylulose 5-phosphate + NADPH + H(+). It functions in the pathway isoprenoid biosynthesis; isopentenyl diphosphate biosynthesis via DXP pathway; isopentenyl diphosphate from 1-deoxy-D-xylulose 5-phosphate: step 1/6. Catalyzes the NADPH-dependent rearrangement and reduction of 1-deoxy-D-xylulose-5-phosphate (DXP) to 2-C-methyl-D-erythritol 4-phosphate (MEP). This Helicobacter pylori (strain ATCC 700392 / 26695) (Campylobacter pylori) protein is 1-deoxy-D-xylulose 5-phosphate reductoisomerase.